We begin with the raw amino-acid sequence, 469 residues long: Adenosylhomocysteinase (469 aa).

The substrate site is built by T63, D139, and E164. NAD(+) is bound at residue 165–167 (TTT). Substrate is bound by residues K194 and D198. NAD(+)-binding positions include N199, 228-233 (GYGDVG), E251, N300, 321-323 (IGH), and N375.

It belongs to the adenosylhomocysteinase family. The cofactor is NAD(+).

It is found in the cytoplasm. It catalyses the reaction S-adenosyl-L-homocysteine + H2O = L-homocysteine + adenosine. It functions in the pathway amino-acid biosynthesis; L-homocysteine biosynthesis; L-homocysteine from S-adenosyl-L-homocysteine: step 1/1. Its function is as follows. May play a key role in the regulation of the intracellular concentration of adenosylhomocysteine. This is Adenosylhomocysteinase from Pseudomonas fluorescens (strain SBW25).